A 464-amino-acid chain; its full sequence is 3-isopropylmalate dehydratase large subunit (464 aa).

Positions 337, 397, and 400 each coordinate [4Fe-4S] cluster.

The protein belongs to the aconitase/IPM isomerase family. LeuC type 1 subfamily. As to quaternary structure, heterodimer of LeuC and LeuD. It depends on [4Fe-4S] cluster as a cofactor.

The catalysed reaction is (2R,3S)-3-isopropylmalate = (2S)-2-isopropylmalate. It participates in amino-acid biosynthesis; L-leucine biosynthesis; L-leucine from 3-methyl-2-oxobutanoate: step 2/4. Catalyzes the isomerization between 2-isopropylmalate and 3-isopropylmalate, via the formation of 2-isopropylmaleate. The sequence is that of 3-isopropylmalate dehydratase large subunit from Bacillus cytotoxicus (strain DSM 22905 / CIP 110041 / 391-98 / NVH 391-98).